A 918-amino-acid chain; its full sequence is Dual serine/threonine and tyrosine protein kinase (918 aa).

Residues 1–19 (MQKDGTRSSRRMEEGDRRN) show a composition bias toward basic and acidic residues. Residues 1 to 29 (MQKDGTRSSRRMEEGDRRNGSTGSSGSVS) are disordered. Positions 643-897 (PRIGRELGRG…PLMGIVQPML (255 aa)) constitute a Protein kinase domain. Residues 649–657 (LGRGQYGVV) and Lys672 contribute to the ATP site. Residue Asp768 is the Proton acceptor of the active site.

The protein belongs to the protein kinase superfamily. Ser/Thr protein kinase family.

The protein localises to the cytoplasm. It is found in the cell membrane. It localises to the apical cell membrane. Its subcellular location is the basolateral cell membrane. The protein resides in the cell junction. The catalysed reaction is L-seryl-[protein] + ATP = O-phospho-L-seryl-[protein] + ADP + H(+). The enzyme catalyses L-threonyl-[protein] + ATP = O-phospho-L-threonyl-[protein] + ADP + H(+). It catalyses the reaction L-tyrosyl-[protein] + ATP = O-phospho-L-tyrosyl-[protein] + ADP + H(+). In terms of biological role, may act as a positive regulator of ERK phosphorylation downstream of fibroblast growth factor-receptor activation. May induce both caspase-dependent apoptosis and caspase-independent cell death. May play a role in the embryonic development. This is Dual serine/threonine and tyrosine protein kinase (dstyk) from Xenopus tropicalis (Western clawed frog).